The primary structure comprises 590 residues: Aspartate--tRNA ligase (590 aa).

Glutamate 174 contributes to the L-aspartate binding site. An aspartate region spans residues glutamine 198–lysine 201. Arginine 220 contributes to the L-aspartate binding site. Residues arginine 220–glutamate 222 and glutamine 229 each bind ATP. Histidine 443 serves as a coordination point for L-aspartate. Glutamate 484 is an ATP binding site. Arginine 491 is a binding site for L-aspartate. Glycine 536–arginine 539 provides a ligand contact to ATP.

Belongs to the class-II aminoacyl-tRNA synthetase family. Type 1 subfamily. As to quaternary structure, homodimer.

The protein resides in the cytoplasm. The catalysed reaction is tRNA(Asp) + L-aspartate + ATP = L-aspartyl-tRNA(Asp) + AMP + diphosphate. Its function is as follows. Catalyzes the attachment of L-aspartate to tRNA(Asp) in a two-step reaction: L-aspartate is first activated by ATP to form Asp-AMP and then transferred to the acceptor end of tRNA(Asp). This is Aspartate--tRNA ligase from Lactococcus lactis subsp. cremoris (strain SK11).